Here is a 118-residue protein sequence, read N- to C-terminus: Class I hydrophobin 1 (118 aa).

A signal peptide spans Met-1–Ala-20. Disulfide bonds link Cys-34–Cys-97, Cys-41–Cys-91, Cys-42–Cys-77, and Cys-98–Cys-111. A glycan (N-linked (GlcNAc...) asparagine) is linked at Asn-54. The N-linked (GlcNAc...) asparagine glycan is linked to Asn-115.

Belongs to the fungal hydrophobin family. In terms of assembly, self-assembles to form functional amyloid fibrils called rodlets. Self-assembly into fibrillar rodlets occurs spontaneously at hydrophobic:hydrophilic interfaces and the rodlets further associate laterally to form amphipathic monolayers.

The protein localises to the secreted. It localises to the cell wall. Functionally, aerial growth, conidiation, and dispersal of filamentous fungi in the environment rely upon a capability of their secreting small amphipathic proteins called hydrophobins (HPBs) with low sequence identity. Class I can self-assemble into an outermost layer of rodlet bundles on aerial cell surfaces, conferring cellular hydrophobicity that supports fungal growth, development and dispersal; whereas Class II form highly ordered films at water-air interfaces through intermolecular interactions but contribute nothing to the rodlet structure. This Coprinopsis cinerea (strain Okayama-7 / 130 / ATCC MYA-4618 / FGSC 9003) (Inky cap fungus) protein is Class I hydrophobin 1.